The chain runs to 497 residues: Probable cytosol aminopeptidase (497 aa).

Mn(2+) is bound by residues Lys-267 and Asp-272. Lys-279 is an active-site residue. Mn(2+) is bound by residues Asp-290, Asp-349, and Glu-351. Residue Arg-353 is part of the active site.

It belongs to the peptidase M17 family. It depends on Mn(2+) as a cofactor.

The protein resides in the cytoplasm. It catalyses the reaction Release of an N-terminal amino acid, Xaa-|-Yaa-, in which Xaa is preferably Leu, but may be other amino acids including Pro although not Arg or Lys, and Yaa may be Pro. Amino acid amides and methyl esters are also readily hydrolyzed, but rates on arylamides are exceedingly low.. The enzyme catalyses Release of an N-terminal amino acid, preferentially leucine, but not glutamic or aspartic acids.. Presumably involved in the processing and regular turnover of intracellular proteins. Catalyzes the removal of unsubstituted N-terminal amino acids from various peptides. This chain is Probable cytosol aminopeptidase, found in Pseudomonas putida (strain ATCC 47054 / DSM 6125 / CFBP 8728 / NCIMB 11950 / KT2440).